Reading from the N-terminus, the 502-residue chain is Tryptophan decarboxylase TDC1 (502 aa).

The span at 1-18 (MGSLDSNYDTESPASVGQ) shows a compositional bias: polar residues. The segment at 1–21 (MGSLDSNYDTESPASVGQFNP) is disordered. Lysine 319 carries the N6-(pyridoxal phosphate)lysine modification.

The protein belongs to the group II decarboxylase family. The cofactor is pyridoxal 5'-phosphate. Highly expressed in apex. Expressed in young stem and bark tissues. Expressed at low levels in leaves, fruits and seeds.

The enzyme catalyses L-tryptophan + H(+) = tryptamine + CO2. In terms of biological role, involved in the biosynthesis of tryptamine. Supplies tryptamine for the indole moiety of camptothecin (CPT), an anti-cancer monoterpene alkaloid. Represents a key step in monoterpene indole alkaloid biosynthesis. Is specific for tryptophan, and inactive against tyrosine, phenylalanine and 3,4-dihydroxyphenylalanine (dopa). This chain is Tryptophan decarboxylase TDC1, found in Camptotheca acuminata (Happy tree).